The following is a 200-amino-acid chain: Large ribosomal subunit protein uL4 (200 aa).

A disordered region spans residues 42 to 65; the sequence is TRAQKTRSEVSGGGAKPWRQKGTG.

This sequence belongs to the universal ribosomal protein uL4 family. Part of the 50S ribosomal subunit.

One of the primary rRNA binding proteins, this protein initially binds near the 5'-end of the 23S rRNA. It is important during the early stages of 50S assembly. It makes multiple contacts with different domains of the 23S rRNA in the assembled 50S subunit and ribosome. In terms of biological role, forms part of the polypeptide exit tunnel. This is Large ribosomal subunit protein uL4 from Vibrio parahaemolyticus serotype O3:K6 (strain RIMD 2210633).